The primary structure comprises 620 residues: Translation initiation factor IF-2 (620 aa).

The 170-residue stretch at 126–295 (KRPPIVTIMG…IVTAEIMELK (170 aa)) folds into the tr-type G domain. Residues 135 to 142 (GHVDHGKT) are G1. 135-142 (GHVDHGKT) contributes to the GTP binding site. Residues 160 to 164 (NITQS) form a G2 region. Residues 181-184 (DTPG) form a G3 region. GTP is bound by residues 181 to 185 (DTPGH) and 235 to 238 (NKMD). Positions 235–238 (NKMD) are G4. A G5 region spans residues 271–273 (SAL).

Belongs to the TRAFAC class translation factor GTPase superfamily. Classic translation factor GTPase family. IF-2 subfamily.

The protein localises to the cytoplasm. Functionally, one of the essential components for the initiation of protein synthesis. Protects formylmethionyl-tRNA from spontaneous hydrolysis and promotes its binding to the 30S ribosomal subunits. Also involved in the hydrolysis of GTP during the formation of the 70S ribosomal complex. The polypeptide is Translation initiation factor IF-2 (Malacoplasma penetrans (strain HF-2) (Mycoplasma penetrans)).